The sequence spans 128 residues: Iron-sulfur cluster insertion protein ErpA (128 aa).

3 residues coordinate iron-sulfur cluster: cysteine 56, cysteine 120, and cysteine 122.

The protein belongs to the HesB/IscA family. In terms of assembly, homodimer. Iron-sulfur cluster serves as cofactor.

Functionally, required for insertion of 4Fe-4S clusters for at least IspG. In Xylella fastidiosa (strain M12), this protein is Iron-sulfur cluster insertion protein ErpA.